We begin with the raw amino-acid sequence, 306 residues long: Ribonuclease Z (306 aa).

H63, H65, D67, H68, H141, D211, and H269 together coordinate Zn(2+). Residue D67 is the Proton acceptor of the active site.

The protein belongs to the RNase Z family. In terms of assembly, homodimer. Requires Zn(2+) as cofactor.

It carries out the reaction Endonucleolytic cleavage of RNA, removing extra 3' nucleotides from tRNA precursor, generating 3' termini of tRNAs. A 3'-hydroxy group is left at the tRNA terminus and a 5'-phosphoryl group is left at the trailer molecule.. Zinc phosphodiesterase, which displays some tRNA 3'-processing endonuclease activity. Probably involved in tRNA maturation, by removing a 3'-trailer from precursor tRNA. The chain is Ribonuclease Z from Staphylococcus aureus (strain USA300).